A 304-amino-acid chain; its full sequence is DnaJ homolog subfamily C member 17 (304 aa).

The J domain maps to 11–76 (DLYALLGIEE…AARAAYDKVR (66 aa)). Residues 79 to 106 (KKQAAERTQKLDEKRKKVKLDLEARERQ) show a composition bias toward basic and acidic residues. Positions 79-145 (KKQAAERTQK…SRQLEEQQRL (67 aa)) are disordered. Residue serine 112 is modified to Phosphoserine. A compositionally biased stretch (basic and acidic residues) spans 118–145 (SRSTRTLEQEIERLREEGSRQLEEQQRL). Positions 178–249 (KCKKEDESKG…NPLKISWLEG (72 aa)) constitute an RRM domain. Position 264 is an N6-methyllysine (lysine 264).

The protein resides in the cytoplasm. The protein localises to the nucleus. Functionally, may negatively affect PAX8-induced thyroglobulin/TG transcription. In Homo sapiens (Human), this protein is DnaJ homolog subfamily C member 17 (DNAJC17).